We begin with the raw amino-acid sequence, 451 residues long: Phosphoglucosamine mutase (451 aa).

Serine 101 acts as the Phosphoserine intermediate in catalysis. Mg(2+) contacts are provided by serine 101, aspartate 240, aspartate 242, and aspartate 244. Serine 101 carries the post-translational modification Phosphoserine.

It belongs to the phosphohexose mutase family. The cofactor is Mg(2+). Activated by phosphorylation.

The catalysed reaction is alpha-D-glucosamine 1-phosphate = D-glucosamine 6-phosphate. Functionally, catalyzes the conversion of glucosamine-6-phosphate to glucosamine-1-phosphate. This chain is Phosphoglucosamine mutase, found in Streptococcus pyogenes serotype M2 (strain MGAS10270).